Here is a 256-residue protein sequence, read N- to C-terminus: 3-deoxy-manno-octulosonate cytidylyltransferase (256 aa).

This sequence belongs to the KdsB family.

The protein resides in the cytoplasm. The enzyme catalyses 3-deoxy-alpha-D-manno-oct-2-ulosonate + CTP = CMP-3-deoxy-beta-D-manno-octulosonate + diphosphate. The protein operates within nucleotide-sugar biosynthesis; CMP-3-deoxy-D-manno-octulosonate biosynthesis; CMP-3-deoxy-D-manno-octulosonate from 3-deoxy-D-manno-octulosonate and CTP: step 1/1. Its pathway is bacterial outer membrane biogenesis; lipopolysaccharide biosynthesis. Activates KDO (a required 8-carbon sugar) for incorporation into bacterial lipopolysaccharide in Gram-negative bacteria. In Histophilus somni (strain 129Pt) (Haemophilus somnus), this protein is 3-deoxy-manno-octulosonate cytidylyltransferase.